Here is a 799-residue protein sequence, read N- to C-terminus: Ribosome biogenesis protein BOP1 homolog (799 aa).

The segment at 1 to 171 (MPRRVRAQKR…DDTSDEEHSL (171 aa)) is disordered. A compositionally biased stretch (acidic residues) spans 58-69 (SESDVTDDEQID). Positions 70–81 (EEARQADRDLLK) are enriched in basic and acidic residues. Residues 93–121 (DPSDADNDDDDDEEEAASDDDDEEEDAEP) show a composition bias toward acidic residues. Residues 122–132 (SSDSSNEASDA) are compositionally biased toward low complexity. 7 WD repeats span residues 457–498 (GHKA…RVVT), 500–538 (DAEVNMVAWCPNAGVSIVAVAHGHTVSLICPRVATAAID), 584–626 (PHHA…TQHP), 629–669 (KRNR…KKLL), 670–709 (TGVRWLSSLAIHPAGDNLIIGSYDKRLCWFDMDLSIKPYK), 713–752 (YHKYALRQVCFHKKYPIFASCGDDGNVHVLHGMVYNDLGQ), and 769–799 (SDGMGVMDCTFHPSQPWLFSAGSDGSIKLHV).

Belongs to the WD repeat BOP1/ERB1 family.

It is found in the nucleus. The protein resides in the nucleolus. Its subcellular location is the nucleoplasm. Its function is as follows. Required for maturation of ribosomal RNAs and formation of the large ribosomal subunit. In Monosiga brevicollis (Choanoflagellate), this protein is Ribosome biogenesis protein BOP1 homolog.